The primary structure comprises 473 residues: Hexaprenyl pyrophosphate synthase, mitochondrial (473 aa).

The isopentenyl diphosphate site is built by K84, R87, and H186. D193 and D197 together coordinate Mg(2+). R202 serves as a coordination point for an all-trans-polyprenyl diphosphate. Isopentenyl diphosphate is bound at residue R203. Positions 323, 324, 361, and 378 each coordinate an all-trans-polyprenyl diphosphate.

Belongs to the FPP/GGPP synthase family. Mg(2+) serves as cofactor.

Its subcellular location is the mitochondrion inner membrane. It participates in cofactor biosynthesis; ubiquinone biosynthesis. Functionally, assembly of polyisoprenoid side chains. The polyprenyl synthase of coenzyme Q biosynthesis catalyzes the formation from isopentenyl diphosphate of all trans-polyprenyl pyrophosphates generally ranging in length of between 6 and 10 isoprene units depending on the species. The sequence is that of Hexaprenyl pyrophosphate synthase, mitochondrial (COQ1) from Saccharomyces cerevisiae (strain ATCC 204508 / S288c) (Baker's yeast).